The chain runs to 63 residues: uncharacterized protein (63 aa).

This is an uncharacterized protein from Saccharomyces cerevisiae (strain ATCC 204508 / S288c) (Baker's yeast).